A 358-amino-acid polypeptide reads, in one-letter code: MFDQLDIVEERYEQLNELLSDPDVVNDSDKLRKYSKEQADLQKTVDVYRNYKAKKEELADIEEMLSETDDKEEVEMLKEESNGIKAELPNLEEELKILLIPKDPNDDKDVIVEIRAAAGGDEAAIFAGDLMRMYSKYAESQGFKTEIVEASESDHGGYKEISFSVSGNGAYSKLKFENGAHRVQRVPETESGGRIHTSTATVAVLPEVEDVEIEIRNEDLKIDTYRSSGAGGQHVNTTDSAVRITHLPTGVIATSSEKSQIQNREKAMKVLKARLYDMKVQEEQQKYASQRKSAVGTGDRSERIRTYNYPQSRVTDHRIGLTLQKLGQIMEGHLEEIIDALTLSEQTDKLKELNNGEL.

The residue at position 233 (Gln-233) is an N5-methylglutamine.

It belongs to the prokaryotic/mitochondrial release factor family. In terms of processing, methylated by PrmC. Methylation increases the termination efficiency of RF1.

It localises to the cytoplasm. Peptide chain release factor 1 directs the termination of translation in response to the peptide chain termination codons UAG and UAA. In Staphylococcus aureus (strain MSSA476), this protein is Peptide chain release factor 1.